The sequence spans 278 residues: Large ribosomal subunit protein uL2 (278 aa).

Disordered stretches follow at residues 26–57 (RSTP…QGGG) and 225–278 (VMNP…NKKR). A compositionally biased stretch (basic residues) spans 258 to 278 (RSPKKASNKYIVRRRKTNKKR).

This sequence belongs to the universal ribosomal protein uL2 family. As to quaternary structure, part of the 50S ribosomal subunit. Forms a bridge to the 30S subunit in the 70S ribosome.

In terms of biological role, one of the primary rRNA binding proteins. Required for association of the 30S and 50S subunits to form the 70S ribosome, for tRNA binding and peptide bond formation. It has been suggested to have peptidyltransferase activity; this is somewhat controversial. Makes several contacts with the 16S rRNA in the 70S ribosome. The polypeptide is Large ribosomal subunit protein uL2 (Streptomyces coelicolor (strain ATCC BAA-471 / A3(2) / M145)).